Consider the following 1252-residue polypeptide: HEAT repeat-containing protein 6 (1252 aa).

One copy of the HEAT 1 repeat lies at 230–269; sequence PDLLGKSGLLMKLSDVTHSDPEVRRAAVHCMANLCLSVPG. Positions 365-417 are disordered; the sequence is DGRSPVKPQQPESSAARPSANKKKKYKVKPKKTQQGEKAEEEEPYGEVDAAPG. The segment covering 384–396 has biased composition (basic residues); it reads ANKKKKYKVKPKK. 2 positions are modified to phosphoserine: Ser-471 and Ser-474. HEAT repeat units follow at residues 524 to 562, 586 to 624, and 630 to 667; these read ELGSPQSVSLMTLTLKDPSPKTRACALQVLSAILEGSKQ, SSIRELHRCLLLALVAESSSQTLTQIIKCLANLVSNAPY, and SLLTKVWNHIKPYIRHKDVNVRVSSLTLLGAVVSTHAP. Thr-689 carries the post-translational modification Phosphothreonine. Phosphoserine is present on Ser-714.

This is HEAT repeat-containing protein 6 (Heatr6) from Rattus norvegicus (Rat).